The following is a 754-amino-acid chain: DNA topoisomerase 4 subunit A (754 aa).

A Topo IIA-type catalytic domain is found at 38-501; the sequence is LPHIGDGLKP…EARALSETEL (464 aa). The O-(5'-phospho-DNA)-tyrosine intermediate role is filled by Y127.

It belongs to the type II topoisomerase GyrA/ParC subunit family. ParC type 1 subfamily. In terms of assembly, heterotetramer composed of ParC and ParE.

It is found in the cell membrane. The catalysed reaction is ATP-dependent breakage, passage and rejoining of double-stranded DNA.. In terms of biological role, topoisomerase IV is essential for chromosome segregation. It relaxes supercoiled DNA. Performs the decatenation events required during the replication of a circular DNA molecule. This chain is DNA topoisomerase 4 subunit A, found in Pseudomonas aeruginosa (strain ATCC 15692 / DSM 22644 / CIP 104116 / JCM 14847 / LMG 12228 / 1C / PRS 101 / PAO1).